A 293-amino-acid chain; its full sequence is Shikimate kinase (293 aa).

87 to 97 (PLAGGLKSSSA) is an ATP binding site.

This sequence belongs to the GHMP kinase family. Archaeal shikimate kinase subfamily.

The protein resides in the cytoplasm. It catalyses the reaction shikimate + ATP = 3-phosphoshikimate + ADP + H(+). The protein operates within metabolic intermediate biosynthesis; chorismate biosynthesis; chorismate from D-erythrose 4-phosphate and phosphoenolpyruvate: step 5/7. This is Shikimate kinase from Methanosarcina mazei (strain ATCC BAA-159 / DSM 3647 / Goe1 / Go1 / JCM 11833 / OCM 88) (Methanosarcina frisia).